The sequence spans 395 residues: S-adenosylmethionine synthase 3 (395 aa).

Mg(2+) is bound at residue glutamate 10. Histidine 16 serves as a coordination point for ATP. Residue glutamate 44 coordinates K(+). Positions 57 and 100 each coordinate L-methionine. Residues 168–170 (DGK), 236–239 (SGRF), aspartate 247, 253–254 (RK), alanine 270, lysine 274, and lysine 278 each bind ATP. An L-methionine-binding site is contributed by aspartate 247. Lysine 278 lines the L-methionine pocket.

It belongs to the AdoMet synthase family. As to quaternary structure, homotetramer. Mn(2+) is required as a cofactor. The cofactor is Mg(2+). Co(2+) serves as cofactor. It depends on K(+) as a cofactor.

The protein resides in the cytoplasm. It catalyses the reaction L-methionine + ATP + H2O = S-adenosyl-L-methionine + phosphate + diphosphate. The protein operates within amino-acid biosynthesis; S-adenosyl-L-methionine biosynthesis; S-adenosyl-L-methionine from L-methionine: step 1/1. In terms of biological role, catalyzes the formation of S-adenosylmethionine from methionine and ATP. The reaction comprises two steps that are both catalyzed by the same enzyme: formation of S-adenosylmethionine (AdoMet) and triphosphate, and subsequent hydrolysis of the triphosphate. This chain is S-adenosylmethionine synthase 3 (METK3), found in Populus trichocarpa (Western balsam poplar).